Reading from the N-terminus, the 350-residue chain is Transmembrane protein 115 (350 aa).

Residues 1–19 (MQRALPGARQHLGAILASA) are Cytoplasmic-facing. The tract at residues 1–205 (MQRALPGARQ…FGLLSSWVYL (205 aa)) is mediates homooligomerization. Residues 20 to 40 (SVVVKALCAVVLFLYLLSFAV) traverse the membrane as a helical segment. Topologically, residues 41–97 (DTGCLAVTPGYLFPPNFWIWTLATHGLMEQHVWDVAISLATVVVAGRLLEPLWGALE) are lumenal. Residues 98 to 118 (LLIFFSVVNVSVGLLGALAYL) form a helical membrane-spanning segment. Residues 119 to 126 (LTYMASFN) are Cytoplasmic-facing. A helical membrane pass occupies residues 127 to 147 (LVYLFTIRIHGALGFLGGVLV). The Lumenal segment spans residues 148 to 165 (ALKQTMGDCVVLRVPQVR). A helical membrane pass occupies residues 166-186 (VSVVPMLLLALLLLLRLATLL). Residues 187–350 (QSPALASYGF…LITLETAPLL (164 aa)) lie on the Cytoplasmic side of the membrane. Residues 206 to 229 (RFYQRHSRGRGDMADHFAFATFFP) form a mediates localization to the Golgi region. Residues 299 to 350 (EDQSAWPSMDDDEEEAGAKTDSPLPLEEASTPPGKVTVPESSLITLETAPLL) are disordered. Residue T329 is modified to Phosphothreonine.

The protein belongs to the TMEM115 family. Homooligomer. Interacts with COPB1. May interact with LMAN1. Interacts with the COG complex; probably through COG3.

The protein resides in the golgi apparatus. The protein localises to the golgi stack membrane. Functionally, may play a role in retrograde transport of proteins from the Golgi to the endoplasmic reticulum. May indirectly play a role in protein glycosylation in the Golgi. This chain is Transmembrane protein 115, found in Mus musculus (Mouse).